A 167-amino-acid polypeptide reads, in one-letter code: NAD(P)H-quinone oxidoreductase subunit I, chloroplastic (167 aa).

2 4Fe-4S ferredoxin-type domains span residues 55 to 84 (GRIHFEFDKCIACEVCVRVCPIDLPVVDWK) and 95 to 124 (LNYSIDFGICIFCGNCVEYCPTNCLSMTEE). [4Fe-4S] cluster contacts are provided by Cys64, Cys67, Cys70, Cys74, Cys104, Cys107, Cys110, and Cys114.

Belongs to the complex I 23 kDa subunit family. As to quaternary structure, NDH is composed of at least 16 different subunits, 5 of which are encoded in the nucleus. The cofactor is [4Fe-4S] cluster.

It localises to the plastid. Its subcellular location is the chloroplast thylakoid membrane. The enzyme catalyses a plastoquinone + NADH + (n+1) H(+)(in) = a plastoquinol + NAD(+) + n H(+)(out). It carries out the reaction a plastoquinone + NADPH + (n+1) H(+)(in) = a plastoquinol + NADP(+) + n H(+)(out). In terms of biological role, NDH shuttles electrons from NAD(P)H:plastoquinone, via FMN and iron-sulfur (Fe-S) centers, to quinones in the photosynthetic chain and possibly in a chloroplast respiratory chain. The immediate electron acceptor for the enzyme in this species is believed to be plastoquinone. Couples the redox reaction to proton translocation, and thus conserves the redox energy in a proton gradient. This is NAD(P)H-quinone oxidoreductase subunit I, chloroplastic from Lepidium virginicum (Virginia pepperweed).